A 360-amino-acid chain; its full sequence is Photosystem II protein D1 2 (360 aa).

Transmembrane regions (helical) follow at residues 29-46, 118-133, and 142-156; these read YIGW…TAVT, HYMI…QWEY, and WICV…ATYS. H118 is a binding site for chlorophyll a. Residue Y126 coordinates pheophytin a. Residues D170 and E189 each contribute to the [CaMn4O5] cluster site. The helical transmembrane segment at 197 to 218 threads the bilayer; that stretch reads FHMFGVAGVLGGSLFAAMHGSL. H198 is a chlorophyll a binding site. A quinone contacts are provided by residues H215 and 264–265; that span reads SF. H215 is a Fe cation binding site. H272 provides a ligand contact to Fe cation. The chain crosses the membrane as a helical span at residues 274–288; the sequence is FLGAWPVVCIWLTAM. H332, E333, D342, and A344 together coordinate [CaMn4O5] cluster. A propeptide spanning residues 345–360 is cleaved from the precursor; sequence AGESAPVALTAPVING.

Belongs to the reaction center PufL/M/PsbA/D family. As to quaternary structure, PSII is composed of 1 copy each of membrane proteins PsbA, PsbB, PsbC, PsbD, PsbE, PsbF, PsbH, PsbI, PsbJ, PsbK, PsbL, PsbM, PsbT, PsbX, PsbY, PsbZ, Psb30/Ycf12, peripheral proteins PsbO, CyanoQ (PsbQ), PsbU, PsbV and a large number of cofactors. It forms dimeric complexes. The cofactor is The D1/D2 heterodimer binds P680, chlorophylls that are the primary electron donor of PSII, and subsequent electron acceptors. It shares a non-heme iron and each subunit binds pheophytin, quinone, additional chlorophylls, carotenoids and lipids. D1 provides most of the ligands for the Mn4-Ca-O5 cluster of the oxygen-evolving complex (OEC). There is also a Cl(-1) ion associated with D1 and D2, which is required for oxygen evolution. The PSII complex binds additional chlorophylls, carotenoids and specific lipids.. Tyr-161 forms a radical intermediate that is referred to as redox-active TyrZ, YZ or Y-Z. Post-translationally, C-terminally processed by CtpA; processing is essential to allow assembly of the oxygen-evolving complex and thus photosynthetic growth.

The protein resides in the cellular thylakoid membrane. It catalyses the reaction 2 a plastoquinone + 4 hnu + 2 H2O = 2 a plastoquinol + O2. In terms of biological role, photosystem II (PSII) is a light-driven water:plastoquinone oxidoreductase that uses light energy to abstract electrons from H(2)O, generating O(2) and a proton gradient subsequently used for ATP formation. It consists of a core antenna complex that captures photons, and an electron transfer chain that converts photonic excitation into a charge separation. The D1/D2 (PsbA/PsbD) reaction center heterodimer binds P680, the primary electron donor of PSII as well as several subsequent electron acceptors. This Acaryochloris marina (strain MBIC 11017) protein is Photosystem II protein D1 2.